The following is a 168-amino-acid chain: 2-C-methyl-D-erythritol 2,4-cyclodiphosphate synthase (168 aa).

Residues aspartate 13 and histidine 15 each contribute to the a divalent metal cation site. 4-CDP-2-C-methyl-D-erythritol 2-phosphate is bound by residues 13–15 and 39–40; these read DVH and HS. Residue histidine 47 participates in a divalent metal cation binding. 4-CDP-2-C-methyl-D-erythritol 2-phosphate-binding positions include 61–63, 66–70, phenylalanine 144, and arginine 147; these read DIG and FPDTD.

It belongs to the IspF family. In terms of assembly, homotrimer. Requires a divalent metal cation as cofactor.

The catalysed reaction is 4-CDP-2-C-methyl-D-erythritol 2-phosphate = 2-C-methyl-D-erythritol 2,4-cyclic diphosphate + CMP. Its pathway is isoprenoid biosynthesis; isopentenyl diphosphate biosynthesis via DXP pathway; isopentenyl diphosphate from 1-deoxy-D-xylulose 5-phosphate: step 4/6. Involved in the biosynthesis of isopentenyl diphosphate (IPP) and dimethylallyl diphosphate (DMAPP), two major building blocks of isoprenoid compounds. Catalyzes the conversion of 4-diphosphocytidyl-2-C-methyl-D-erythritol 2-phosphate (CDP-ME2P) to 2-C-methyl-D-erythritol 2,4-cyclodiphosphate (ME-CPP) with a corresponding release of cytidine 5-monophosphate (CMP). The sequence is that of 2-C-methyl-D-erythritol 2,4-cyclodiphosphate synthase from Ralstonia nicotianae (strain ATCC BAA-1114 / GMI1000) (Ralstonia solanacearum).